A 503-amino-acid chain; its full sequence is Methylthioalkylmalate synthase 3, chloroplastic (503 aa).

A chloroplast-targeting transit peptide spans 1–51; it reads MASLLLTSSSMITTSCRSMVLRSGLPIGSSFPSLRLTRPYDKATLFVSCCS. In terms of domain architecture, Pyruvate carboxyltransferase spans 85-359; sequence VRVLDTTLRD…YTKIDSRQIM (275 aa).

Belongs to the alpha-IPM synthase/homocitrate synthase family. The cofactor is Mn(2+). As to expression, highly expressed in roots, leaves, and siliques. Lower amounts in stems and flowers.

It is found in the plastid. The protein localises to the chloroplast. The enzyme catalyses an omega-(methylsulfanyl)-2-oxoalkanoate + acetyl-CoA + H2O = a 2-(omega-methylsulfanyl)alkylmalate + CoA + H(+). Not activated by ATP. Determines the side chain length of aliphatic glucosinolate structures. Accepts all the omega-methylthio-2-oxoalkanoic acids needed to form the known C3 to C8 glucosinolates. Also able to convert pyruvate to citramalate, 2-oxoisovalerate to isopropylmalate, 4-methyl-2-oxopentanoate and 5-methyl-2-oxohexanoate for Leu-derived glucosinolates, 3-methyl-2-oxopentanoate for Ile-derived glucosinolates and phenylpyruvate to phenylethylglucosinolate. This chain is Methylthioalkylmalate synthase 3, chloroplastic (MAM3), found in Arabidopsis thaliana (Mouse-ear cress).